The sequence spans 384 residues: 8-amino-7-oxononanoate synthase (384 aa).

R21 provides a ligand contact to substrate. A pyridoxal 5'-phosphate-binding site is contributed by 108–109 (GF). H133 is a substrate binding site. 3 residues coordinate pyridoxal 5'-phosphate: S179, H207, and T233. K236 is subject to N6-(pyridoxal phosphate)lysine. Residue T352 participates in substrate binding.

This sequence belongs to the class-II pyridoxal-phosphate-dependent aminotransferase family. BioF subfamily. In terms of assembly, homodimer. Requires pyridoxal 5'-phosphate as cofactor.

The enzyme catalyses 6-carboxyhexanoyl-[ACP] + L-alanine + H(+) = (8S)-8-amino-7-oxononanoate + holo-[ACP] + CO2. It participates in cofactor biosynthesis; biotin biosynthesis. Its function is as follows. Catalyzes the decarboxylative condensation of pimeloyl-[acyl-carrier protein] and L-alanine to produce 8-amino-7-oxononanoate (AON), [acyl-carrier protein], and carbon dioxide. This Escherichia coli O17:K52:H18 (strain UMN026 / ExPEC) protein is 8-amino-7-oxononanoate synthase.